We begin with the raw amino-acid sequence, 168 residues long: Putative ankyrin repeat protein RBE_1411 (168 aa).

ANK repeat units follow at residues 59 to 88 (TIFSELSIAIDKGNLEPLKNFLKNNKLQHK), 98 to 127 (YGDTPLCYAAEKNNFEVAKILIKYGADLTI), and 131 to 160 (KGETPIELFSQYGNREAVNYLQHCLDILGN).

In Rickettsia bellii (strain RML369-C), this protein is Putative ankyrin repeat protein RBE_1411.